A 313-amino-acid polypeptide reads, in one-letter code: Ribosomal RNA small subunit methyltransferase H (313 aa).

Residues 35 to 37 (GGH), aspartate 55, phenylalanine 79, aspartate 101, and glutamine 108 each bind S-adenosyl-L-methionine.

The protein belongs to the methyltransferase superfamily. RsmH family.

It localises to the cytoplasm. It catalyses the reaction cytidine(1402) in 16S rRNA + S-adenosyl-L-methionine = N(4)-methylcytidine(1402) in 16S rRNA + S-adenosyl-L-homocysteine + H(+). Specifically methylates the N4 position of cytidine in position 1402 (C1402) of 16S rRNA. This is Ribosomal RNA small subunit methyltransferase H from Escherichia coli O139:H28 (strain E24377A / ETEC).